A 243-amino-acid chain; its full sequence is Orotidine 5'-phosphate decarboxylase (243 aa).

Substrate-binding positions include Asp19, Lys41, 69–78 (DLKFFDIPAT), Thr124, Arg185, Gln194, Gly214, and Arg215. Lys71 serves as the catalytic Proton donor.

This sequence belongs to the OMP decarboxylase family. Type 1 subfamily. In terms of assembly, homodimer.

It carries out the reaction orotidine 5'-phosphate + H(+) = UMP + CO2. It participates in pyrimidine metabolism; UMP biosynthesis via de novo pathway; UMP from orotate: step 2/2. Its function is as follows. Catalyzes the decarboxylation of orotidine 5'-monophosphate (OMP) to uridine 5'-monophosphate (UMP). This chain is Orotidine 5'-phosphate decarboxylase, found in Xanthomonas oryzae pv. oryzae (strain MAFF 311018).